We begin with the raw amino-acid sequence, 236 residues long: 2-C-methyl-D-erythritol 4-phosphate cytidylyltransferase (236 aa).

Belongs to the IspD/TarI cytidylyltransferase family. IspD subfamily. In terms of assembly, homodimer.

It catalyses the reaction 2-C-methyl-D-erythritol 4-phosphate + CTP + H(+) = 4-CDP-2-C-methyl-D-erythritol + diphosphate. The protein operates within isoprenoid biosynthesis; isopentenyl diphosphate biosynthesis via DXP pathway; isopentenyl diphosphate from 1-deoxy-D-xylulose 5-phosphate: step 2/6. In terms of biological role, catalyzes the formation of 4-diphosphocytidyl-2-C-methyl-D-erythritol from CTP and 2-C-methyl-D-erythritol 4-phosphate (MEP). This Escherichia coli O139:H28 (strain E24377A / ETEC) protein is 2-C-methyl-D-erythritol 4-phosphate cytidylyltransferase.